A 139-amino-acid polypeptide reads, in one-letter code: uncharacterized protein (139 aa).

The next 3 membrane-spanning stretches (helical) occupy residues 19-39 (CIIFMVIVGLGLLFAFQFILG), 64-84 (IFNVLVEHSYYGLLLSTFNLF), and 89-109 (AITIRLCFIFAISIVIFWILG).

It is found in the cell membrane. This is an uncharacterized protein from Methanocaldococcus jannaschii (strain ATCC 43067 / DSM 2661 / JAL-1 / JCM 10045 / NBRC 100440) (Methanococcus jannaschii).